Reading from the N-terminus, the 79-residue chain is uncharacterized protein (79 aa).

Residues 1-27 (MRQRGQEHLPTSVKSEPRACNNPTVAE) form a disordered region.

This is an uncharacterized protein from Homo sapiens (Human).